The chain runs to 304 residues: uncharacterized protein (304 aa).

The interval Met-1–Ser-183 is disordered. Positions Pro-132–Ser-166 are enriched in low complexity. A run of 2 helical transmembrane segments spans residues Leu-206–Val-226 and Phe-265–Val-285.

The protein to M.leprae ML0007.

The protein localises to the cell membrane. This is an uncharacterized protein from Mycobacterium tuberculosis (strain ATCC 25618 / H37Rv).